The sequence spans 1203 residues: Metabotropic glutamate receptor 5 (1203 aa).

The N-terminal stretch at 1 to 18 (MVLLLILSVLLLKEDVRG) is a signal peptide. Over 19-579 (SAQSSERRVV…QYLRWGDPEP (561 aa)) the chain is Extracellular. A disulfide bridge links cysteine 57 with cysteine 99. L-glutamate is bound at residue tyrosine 64. The N-linked (GlcNAc...) asparagine glycan is linked to asparagine 88. L-glutamate contacts are provided by residues serine 151 and 172 to 174 (SAT). Residue asparagine 209 is glycosylated (N-linked (GlcNAc...) asparagine). Residue tyrosine 222 participates in L-glutamate binding. 8 disulfide bridges follow: cysteine 240–cysteine 529, cysteine 275–cysteine 277, cysteine 364–cysteine 380, cysteine 418–cysteine 425, cysteine 510–cysteine 530, cysteine 514–cysteine 533, cysteine 536–cysteine 548, and cysteine 551–cysteine 564. L-glutamate is bound at residue aspartate 304. N-linked (GlcNAc...) asparagine glycosylation is found at asparagine 377 and asparagine 381. Residue lysine 395 participates in L-glutamate binding. The N-linked (GlcNAc...) asparagine glycan is linked to asparagine 444. A helical transmembrane segment spans residues 580–602 (IAAVVFACLGLLATLFVTVIFII). Residues 603–612 (YRDTPVVKSS) lie on the Cytoplasmic side of the membrane. A helical transmembrane segment spans residues 613-635 (SRELCYIILAGICLGYLCTFCLI). Topologically, residues 636–643 (AKPKQIYC) are extracellular. The cysteines at positions 643 and 732 are disulfide-linked. A helical membrane pass occupies residues 644–666 (YLQRIGIGLSPAMSYSALVTKTN). The Cytoplasmic segment spans residues 667–692 (RIARILAGSKKKICTKKPRFMSACAQ). A helical transmembrane segment spans residues 693 to 713 (LVIAFILICIQLGIIVALFIM). Over 714-736 (EPPDIMHDYPSIREVYLICNTTN) the chain is Extracellular. The N-linked (GlcNAc...) asparagine glycan is linked to asparagine 733. A helical membrane pass occupies residues 737-758 (LGVVTPLGYNGLLILSCTFYAF). Over 759–771 (KTRNVPANFNEAK) the chain is Cytoplasmic. A helical membrane pass occupies residues 772–794 (YIAFTMYTTCIIWLAFVPIYFGS). The Extracellular portion of the chain corresponds to 795-797 (NYK). A helical transmembrane segment spans residues 798 to 819 (IITMCFSVSLSATVALGCMFVP). The Cytoplasmic segment spans residues 820–1203 (KVYIILAKPE…RDYTQSSSSL (384 aa)). Position 860 is a phosphoserine (serine 860). Arginine 868 carries the omega-N-methylarginine modification. 2 disordered regions span residues 892 to 1054 (FTPK…GSLM) and 1120 to 1182 (TGGA…ALCI). Residues 905 to 920 (TMSSSNGKSVTWAQNE) are compositionally biased toward polar residues. Arginine 924 is modified (omega-N-methylarginine). The span at 960–977 (QGAGAGGGSGPGAAGAGS) shows a compositional bias: gly residues. Over residues 1007–1019 (PAAARPRSPSPIS) the composition is skewed to low complexity. A phosphoserine mark is found at serine 1014 and serine 1016. 2 stretches are compositionally biased toward polar residues: residues 1039–1054 (HSETAARSSSSQGSLM) and 1165–1176 (DSGSTTPNSPVS).

It belongs to the G-protein coupled receptor 3 family. In terms of assembly, the PPXXF motif binds HOMER1, HOMER2 and HOMER3. Interacts with RYR1, RYR2, ITPR1, SHANK1 and SHANK3. Interacts with SIAH1 and TAMALIN. Interacts with NCDN. Interacts with NECAB2. Interacts with CAMK2A.

Its subcellular location is the cell membrane. G-protein coupled receptor for glutamate. Ligand binding causes a conformation change that triggers signaling via guanine nucleotide-binding proteins (G proteins) and modulates the activity of down-stream effectors. Signaling activates a phosphatidylinositol-calcium second messenger system and generates a calcium-activated chloride current. Plays an important role in the regulation of synaptic plasticity and the modulation of the neural network activity. This chain is Metabotropic glutamate receptor 5 (Grm5), found in Mus musculus (Mouse).